Consider the following 434-residue polypeptide: Serine hydroxymethyltransferase 1 (434 aa).

Residues Leu136 and 140-142 (GHL) contribute to the (6S)-5,6,7,8-tetrahydrofolate site. Lys245 carries the post-translational modification N6-(pyridoxal phosphate)lysine.

Belongs to the SHMT family. As to quaternary structure, homodimer. Pyridoxal 5'-phosphate serves as cofactor.

The protein localises to the cytoplasm. The catalysed reaction is (6R)-5,10-methylene-5,6,7,8-tetrahydrofolate + glycine + H2O = (6S)-5,6,7,8-tetrahydrofolate + L-serine. It functions in the pathway one-carbon metabolism; tetrahydrofolate interconversion. It participates in amino-acid biosynthesis; glycine biosynthesis; glycine from L-serine: step 1/1. Its function is as follows. Catalyzes the reversible interconversion of serine and glycine with tetrahydrofolate (THF) serving as the one-carbon carrier. This reaction serves as the major source of one-carbon groups required for the biosynthesis of purines, thymidylate, methionine, and other important biomolecules. Also exhibits THF-independent aldolase activity toward beta-hydroxyamino acids, producing glycine and aldehydes, via a retro-aldol mechanism. The polypeptide is Serine hydroxymethyltransferase 1 (Rhodospirillum rubrum (strain ATCC 11170 / ATH 1.1.1 / DSM 467 / LMG 4362 / NCIMB 8255 / S1)).